A 198-amino-acid polypeptide reads, in one-letter code: GTP-binding protein Di-Ras1 (198 aa).

Residues 17–22 (GVGKSS), 33–39 (RDTYIPT), 61–65 (DTTGS), 121–125 (NKCDE), Ala151, and 151–152 (AK) contribute to the GTP site. Positions 36–44 (YIPTIEDTY) match the Effector region motif. Over residues 178 to 192 (DGKRSGKQKRTDRVK) the composition is skewed to basic and acidic residues. A disordered region spans residues 178–198 (DGKRSGKQKRTDRVKGKCTLM). The residue at position 195 (Cys195) is a Cysteine methyl ester. Cys195 carries S-geranylgeranyl cysteine lipidation. Positions 196–198 (TLM) are cleaved as a propeptide — removed in mature form.

This sequence belongs to the small GTPase superfamily. Di-Ras family. Highly expressed in heart and brain.

The protein localises to the cell membrane. Displays low GTPase activity and exists predominantly in the GTP-bound form. This Homo sapiens (Human) protein is GTP-binding protein Di-Ras1 (DIRAS1).